The following is a 406-amino-acid chain: Imidazolonepropionase (406 aa).

His-72 and His-74 together coordinate Fe(3+). Zn(2+) contacts are provided by His-72 and His-74. The 4-imidazolone-5-propanoate site is built by Arg-81, Tyr-144, and His-177. N-formimidoyl-L-glutamate is bound at residue Tyr-144. His-242 lines the Fe(3+) pocket. A Zn(2+)-binding site is contributed by His-242. Gln-245 contributes to the 4-imidazolone-5-propanoate binding site. Fe(3+) is bound at residue Asp-317. Asp-317 contacts Zn(2+). N-formimidoyl-L-glutamate contacts are provided by Asn-319 and Gly-321. Thr-322 contacts 4-imidazolone-5-propanoate.

This sequence belongs to the metallo-dependent hydrolases superfamily. HutI family. Zn(2+) is required as a cofactor. Requires Fe(3+) as cofactor.

The protein resides in the cytoplasm. The catalysed reaction is 4-imidazolone-5-propanoate + H2O = N-formimidoyl-L-glutamate. It functions in the pathway amino-acid degradation; L-histidine degradation into L-glutamate; N-formimidoyl-L-glutamate from L-histidine: step 3/3. In terms of biological role, catalyzes the hydrolytic cleavage of the carbon-nitrogen bond in imidazolone-5-propanoate to yield N-formimidoyl-L-glutamate. It is the third step in the universal histidine degradation pathway. This Yersinia pseudotuberculosis serotype O:1b (strain IP 31758) protein is Imidazolonepropionase.